Reading from the N-terminus, the 140-residue chain is L-fucose mutarotase (140 aa).

His-22 serves as the catalytic Proton donor. Substrate-binding positions include Asp-30, Arg-107, and 129 to 131 (YGN).

It belongs to the RbsD / FucU family. FucU mutarotase subfamily. In terms of assembly, homodecamer.

It is found in the cytoplasm. It carries out the reaction alpha-L-fucose = beta-L-fucose. Its pathway is carbohydrate metabolism; L-fucose metabolism. Functionally, involved in the anomeric conversion of L-fucose. This Citrobacter koseri (strain ATCC BAA-895 / CDC 4225-83 / SGSC4696) protein is L-fucose mutarotase.